Consider the following 498-residue polypeptide: WD repeat-containing protein 55 homolog (498 aa).

A disordered region spans residues 1–131 (MHTHNNFKTP…ATFDLDEDDE (131 aa)). 2 stretches are compositionally biased toward acidic residues: residues 12–23 (DEDELDDLDEDM) and 31–48 (IEQEVLNESDSDNDEYDL). Low complexity-rich tracts occupy residues 67 to 82 (NDSSSSDDSFDPNAAD) and 93 to 103 (AGGVTAGGATS). WD repeat units lie at residues 154 to 193 (KLEDFITDICFHPDRDIIALATIIGDVHLYEYDNEANKLL), 198 to 237 (VHSKACRDVEFTEDGRFLLTCSKDKCVMVTDMETEKLKKL), 241 to 279 (AHDDAINTLHVLNENLFASGDDAGTVKLWDLRTKNAIFE), 282 to 321 (ELEDQITQLTTNEQSKLLLATSADGYLTTFNISARKMYVQ), 324 to 363 (PYEEELNCMGVYRGDSKLVVGTSKGRLYTYNWGQFGYHCD), and 408 to 447 (QHNMPIESLDVNASGELIASSSHNNDVRFWNVKYFEDFGD). The tract at residues 478-498 (DLTKENADGDDDPGAGPSNMA) is disordered.

This sequence belongs to the WD repeat WDR55 family.

The protein is WD repeat-containing protein 55 homolog of Drosophila melanogaster (Fruit fly).